Consider the following 351-residue polypeptide: Porphobilinogen deaminase (351 aa).

C242 bears the S-(dipyrrolylmethanemethyl)cysteine mark. Residues 257–306 form the RPE1 insert domain; the sequence is PRHLSKLAYREVLEGNTEALATAAYKSNRTDASTGLTYKLPLEVEFGKVS.

This sequence belongs to the HMBS family. Monomer. Dipyrromethane is required as a cofactor.

The catalysed reaction is 4 porphobilinogen + H2O = hydroxymethylbilane + 4 NH4(+). It functions in the pathway porphyrin-containing compound metabolism; protoporphyrin-IX biosynthesis; coproporphyrinogen-III from 5-aminolevulinate: step 2/4. In terms of biological role, tetrapolymerization of the monopyrrole PBG into the hydroxymethylbilane pre-uroporphyrinogen in several discrete steps. The polypeptide is Porphobilinogen deaminase (Rickettsia conorii (strain ATCC VR-613 / Malish 7)).